We begin with the raw amino-acid sequence, 677 residues long: DNA ligase (677 aa).

NAD(+) contacts are provided by residues 38–42 (DYDFD), 87–88 (SL), and glutamate 121. Lysine 123 serves as the catalytic N6-AMP-lysine intermediate. 4 residues coordinate NAD(+): arginine 144, glutamate 187, lysine 300, and lysine 324. Cysteine 418, cysteine 421, cysteine 436, and cysteine 442 together coordinate Zn(2+). A BRCT domain is found at 601–677 (LINSNFEGLS…ISEEEFEAML (77 aa)).

The protein belongs to the NAD-dependent DNA ligase family. LigA subfamily. Requires Mg(2+) as cofactor. Mn(2+) is required as a cofactor.

It catalyses the reaction NAD(+) + (deoxyribonucleotide)n-3'-hydroxyl + 5'-phospho-(deoxyribonucleotide)m = (deoxyribonucleotide)n+m + AMP + beta-nicotinamide D-nucleotide.. DNA ligase that catalyzes the formation of phosphodiester linkages between 5'-phosphoryl and 3'-hydroxyl groups in double-stranded DNA using NAD as a coenzyme and as the energy source for the reaction. It is essential for DNA replication and repair of damaged DNA. In Chlorobium luteolum (strain DSM 273 / BCRC 81028 / 2530) (Pelodictyon luteolum), this protein is DNA ligase.